The chain runs to 118 residues: Large ribosomal subunit protein bL20 (118 aa).

It belongs to the bacterial ribosomal protein bL20 family.

Its function is as follows. Binds directly to 23S ribosomal RNA and is necessary for the in vitro assembly process of the 50S ribosomal subunit. It is not involved in the protein synthesizing functions of that subunit. The sequence is that of Large ribosomal subunit protein bL20 from Thermosipho melanesiensis (strain DSM 12029 / CIP 104789 / BI429).